A 451-amino-acid polypeptide reads, in one-letter code: Phosphoglucosamine mutase (451 aa).

Catalysis depends on Ser-101, which acts as the Phosphoserine intermediate. Mg(2+)-binding residues include Ser-101, Asp-240, Asp-242, and Asp-244. A Phosphoserine modification is found at Ser-101.

The protein belongs to the phosphohexose mutase family. It depends on Mg(2+) as a cofactor. Post-translationally, activated by phosphorylation.

The enzyme catalyses alpha-D-glucosamine 1-phosphate = D-glucosamine 6-phosphate. In terms of biological role, catalyzes the conversion of glucosamine-6-phosphate to glucosamine-1-phosphate. The sequence is that of Phosphoglucosamine mutase from Streptococcus pyogenes serotype M1.